We begin with the raw amino-acid sequence, 547 residues long: Chaperonin GroEL (547 aa).

ATP contacts are provided by residues 30–33 (TLGP), Lys-51, 87–91 (DGTTT), Gly-415, and Asp-495.

This sequence belongs to the chaperonin (HSP60) family. In terms of assembly, forms a cylinder of 14 subunits composed of two heptameric rings stacked back-to-back. Interacts with the co-chaperonin GroES.

It is found in the cytoplasm. It catalyses the reaction ATP + H2O + a folded polypeptide = ADP + phosphate + an unfolded polypeptide.. Its function is as follows. Together with its co-chaperonin GroES, plays an essential role in assisting protein folding. The GroEL-GroES system forms a nano-cage that allows encapsulation of the non-native substrate proteins and provides a physical environment optimized to promote and accelerate protein folding. The protein is Chaperonin GroEL of Allorhizobium ampelinum (strain ATCC BAA-846 / DSM 112012 / S4) (Agrobacterium vitis (strain S4)).